A 493-amino-acid polypeptide reads, in one-letter code: Glycogen synthase 1 (493 aa).

Lys-15 contributes to the ADP-alpha-D-glucose binding site.

This sequence belongs to the glycosyltransferase 1 family. Bacterial/plant glycogen synthase subfamily.

The catalysed reaction is [(1-&gt;4)-alpha-D-glucosyl](n) + ADP-alpha-D-glucose = [(1-&gt;4)-alpha-D-glucosyl](n+1) + ADP + H(+). The protein operates within glycan biosynthesis; glycogen biosynthesis. In terms of biological role, synthesizes alpha-1,4-glucan chains using ADP-glucose. The protein is Glycogen synthase 1 of Methylococcus capsulatus (strain ATCC 33009 / NCIMB 11132 / Bath).